Consider the following 287-residue polypeptide: Probable WRKY transcription factor 57 (287 aa).

The segment covering Thr-86–Ser-99 has biased composition (low complexity). Positions Thr-86–Phe-137 are disordered. Basic residues predominate over residues Glu-122–Gln-132. The segment at residues Ser-141–Ile-206 is a DNA-binding region (WRKY). Residues Asp-248–Pro-287 are disordered. The segment covering Glu-262 to Ser-271 has biased composition (polar residues).

It belongs to the WRKY group II-c family.

It localises to the nucleus. Transcription factor. Interacts specifically with the W box (5'-(T)TGAC[CT]-3'), a frequently occurring elicitor-responsive cis-acting element. The chain is Probable WRKY transcription factor 57 (WRKY57) from Arabidopsis thaliana (Mouse-ear cress).